We begin with the raw amino-acid sequence, 65 residues long: Large ribosomal subunit protein bL32 (65 aa).

Positions 1–19 (MAVQKSRKTPSKRGMRRSH) are enriched in basic residues. Residues 1-32 (MAVQKSRKTPSKRGMRRSHNALVKSTLSEDQE) are disordered.

It belongs to the bacterial ribosomal protein bL32 family.

The protein is Large ribosomal subunit protein bL32 of Vesicomyosocius okutanii subsp. Calyptogena okutanii (strain HA).